Here is a 145-residue protein sequence, read N- to C-terminus: I-leader protein (145 aa).

Its subcellular location is the host cytoplasm. It is found in the host perinuclear region. The protein is I-leader protein of Human adenovirus C serotype 2 (HAdV-2).